The primary structure comprises 138 residues: Large-conductance mechanosensitive channel (138 aa).

3 consecutive transmembrane segments (helical) span residues 19–39 (VGVIIGGAFGAIVTSLVGDII), 40–60 (MPIIGAITGGLDFSNYFIPLA), and 81–101 (GSFLTLTLNFFIVAFVLFMVI).

Belongs to the MscL family. Homopentamer.

It is found in the cell inner membrane. Channel that opens in response to stretch forces in the membrane lipid bilayer. May participate in the regulation of osmotic pressure changes within the cell. The sequence is that of Large-conductance mechanosensitive channel from Bradyrhizobium sp. (strain ORS 278).